Here is a 628-residue protein sequence, read N- to C-terminus: Alpha pinene synthase, chloroplastic (628 aa).

The transit peptide at 1 to 46 directs the protein to the chloroplast; sequence MSLGCITPLASAMVGPKLVRPLIHHNPLFHHKPLNRPYLQTKIPLR. 3 residues coordinate Mg(2+): aspartate 381, aspartate 385, and glutamate 532. The DDXXD motif signature appears at 381 to 385; sequence DDMYD.

Belongs to the terpene synthase family. Tpsa subfamily. Requires Mg(2+) as cofactor. The cofactor is Mn(2+).

The protein resides in the plastid. It localises to the chloroplast. The catalysed reaction is (2E)-geranyl diphosphate = alpha-pinene + diphosphate. It functions in the pathway secondary metabolite biosynthesis; terpenoid biosynthesis. In terms of biological role, monoterpene synthase involved in the biosynthesis of volatile compounds. Mediates the conversion of (2E)-geranyl diphosphate (GPP) into alpha-pinene. The protein is Alpha pinene synthase, chloroplastic of Chamaecyparis formosensis (Formosan cypress).